The primary structure comprises 496 residues: Myotilin (496 aa).

A disordered region spans residues 1–37 (MFNYERPKHFIQPQNPCGSRLQPPGPEVSGFPSQTKQ). An Omega-N-methylarginine modification is found at arginine 20. A necessary for interaction with ACTN1 region spans residues 78–149 (PNPGQKVTAT…PTPKTPDHEI (72 aa)). 2 stretches are compositionally biased toward polar residues: residues 202 to 213 (NSDVQDSPQHNP) and 221 to 233 (PTSQVRSRSSSRA). The disordered stretch occupies residues 202-239 (NSDVQDSPQHNPEQARLHVPTSQVRSRSSSRAEANDQD). The tract at residues 213–491 (PEQARLHVPT…QRLAAQSGLY (279 aa)) is necessary for interaction with FLNC. The necessary for interaction with ACTA1 stretch occupies residues 213-496 (PEQARLHVPT…QSGLYESEEL (284 aa)). Ig-like C2-type domains lie at 248-333 (PRFI…ATFT) and 347-439 (PMFI…LDVT).

This sequence belongs to the myotilin/palladin family. In terms of assembly, homodimer. Interacts with ACTA1, ACTN1, FLNA, FLNB, FLNC, and MYOZ2. Interacts with the C-terminal region of MYOZ1. As to expression, expressed in skeletal muscle (at protein level).

The protein resides in the cell membrane. It is found in the sarcolemma. The protein localises to the cytoplasm. It localises to the cytoskeleton. Its subcellular location is the myofibril. The protein resides in the sarcomere. It is found in the z line. Component of a complex of multiple actin cross-linking proteins. Involved in the control of myofibril assembly and stability at the Z lines in muscle cells. The polypeptide is Myotilin (Myot) (Mus musculus (Mouse)).